Reading from the N-terminus, the 473-residue chain is Photosystem II CP43 reaction center protein (473 aa).

Positions 1-14 (MKNLYSLRRFYHVE) are excised as a propeptide. An N-acetylthreonine modification is found at T15. A Phosphothreonine modification is found at T15. 5 consecutive transmembrane segments (helical) span residues 69-93 (LFEV…PHLA), 134-155 (LIGP…KDKN), 178-200 (KARY…RVIT), 255-275 (KPFG…LSYS), and 291-312 (WFNN…ASQA). E367 lines the [CaMn4O5] cluster pocket. Residues 447 to 471 (RARAAAAGFEKGIDRDTEPTLFMRP) form a helical membrane-spanning segment.

The protein belongs to the PsbB/PsbC family. PsbC subfamily. In terms of assembly, PSII is composed of 1 copy each of membrane proteins PsbA, PsbB, PsbC, PsbD, PsbE, PsbF, PsbH, PsbI, PsbJ, PsbK, PsbL, PsbM, PsbT, PsbX, PsbY, PsbZ, Psb30/Ycf12, at least 3 peripheral proteins of the oxygen-evolving complex and a large number of cofactors. It forms dimeric complexes. Requires Binds multiple chlorophylls and provides some of the ligands for the Ca-4Mn-5O cluster of the oxygen-evolving complex. It may also provide a ligand for a Cl- that is required for oxygen evolution. PSII binds additional chlorophylls, carotenoids and specific lipids. as cofactor.

It localises to the plastid. It is found in the chloroplast thylakoid membrane. In terms of biological role, one of the components of the core complex of photosystem II (PSII). It binds chlorophyll and helps catalyze the primary light-induced photochemical processes of PSII. PSII is a light-driven water:plastoquinone oxidoreductase, using light energy to abstract electrons from H(2)O, generating O(2) and a proton gradient subsequently used for ATP formation. The sequence is that of Photosystem II CP43 reaction center protein from Nephroselmis olivacea (Green alga).